The following is a 224-amino-acid chain: Small ribosomal subunit protein uS3 (224 aa).

Positions 38–106 (LREFVKEKLG…EVYLNVVEVR (69 aa)) constitute a KH type-2 domain.

It belongs to the universal ribosomal protein uS3 family. As to quaternary structure, part of the 30S ribosomal subunit. Forms a tight complex with proteins S10 and S14.

Binds the lower part of the 30S subunit head. Binds mRNA in the 70S ribosome, positioning it for translation. The chain is Small ribosomal subunit protein uS3 from Anaeromyxobacter dehalogenans (strain 2CP-C).